The sequence spans 840 residues: MKLWTYLLYPSLLACLSLQSQSPMPSVRGSCDTLCNCEEKDGIMIINCEEKGINKLSQISVPPSRPFHLSLLNNGLTMLHTNDFSGLTNALSIHLGFNNIADIETGAFNGLGLLKQLHINHNSLEILKEDTFHGLENLEFLQADNNFITIIEPSAFSKLNRLKVLILNDNAIESLPPNIFRFVPLTHLDLRGNQLQTLPYVGFLEHIGRILDLQLEDNKWACNCELLQLKNWLENMPPQSIIGDVICYSPPPFKGSVLSRLKKESFCPTPPVYEEHEDPSGSLLAITSSTSDSRLSSKNTSILKQPTKAPGLIPYLTKPSTQLPVPYCPIPCNCKVLSPSGLLIHCQERNIESLSDLQPPPHNPRKLILAGNIIHTLMKSDLTDYFTLEMLHLGNNRIEVLEEGSFMNLTRLQKLYLNGNHLTKLNKGMFLGLHSLEYLYLEYNAVKEILPGTFNPMPKLKVLYLNNNLLQVLPAHIFLGIPLTRVNLKTNQFTHLPVSNILDDLDFLIQIDLEDNPWDCSCDLVGLQQWIHKLGKGTMTDDILCTSPGHLDKKELKALNSDLLCPGLVNNPSMPTQTTYVIVTSPTVAADTASTLFSSLTDAVPLSVLILGLLIVFITIVFCAAGIVVFVLHRRRRYKKKKVEEQLRDNSPVHLQYSMYGHKTTHHTTERPSSSLYEQHMVSPMVHVYRSPSFGPKHLEEVEERNDKEGNDAKHLQRSLLERENHSPLTGSNMKYKTTDQSTDFISFQDASLLYRNILEKERELQQLGITEYLRKNLAQLQPEVEVNYPGAHEELKLMETLMYSRPRKVLVEQTKNEYFELKANLHAEPDYLEVLEQQT.

The first 18 residues, 1 to 18, serve as a signal peptide directing secretion; sequence MKLWTYLLYPSLLACLSL. One can recognise an LRRNT 1 domain in the interval 22-67; sequence SPMPSVRGSCDTLCNCEEKDGIMIINCEEKGINKLSQISVPPSRPF. At 23 to 609 the chain is on the extracellular side; sequence PMPSVRGSCD…LTDAVPLSVL (587 aa). LRR repeat units follow at residues 89–110, 113–134, 137–158, 161–182, and 184–205; these read NALS…AFNG, LLKQ…TFHG, NLEF…AFSK, RLKV…IFRF, and PLTH…GFLE. The region spanning 218-269 is the LRRCT 1 domain; it reads NKWACNCELLQLKNWLENMPPQSIIGDVICYSPPPFKGSVLSRLKKESFCPT. Residues 319-360 form the LRRNT 2 domain; the sequence is PSTQLPVPYCPIPCNCKVLSPSGLLIHCQERNIESLSDLQPP. LRR repeat units follow at residues 363-384, 387-408, 411-432, 435-456, 459-480, and 482-503; these read NPRK…DLTD, TLEM…SFMN, RLQK…MFLG, SLEY…TFNP, KLKV…IFLG, and PLTR…NILD. The 52-residue stretch at 516 to 567 folds into the LRRCT 2 domain; that stretch reads NPWDCSCDLVGLQQWIHKLGKGTMTDDILCTSPGHLDKKELKALNSDLLCPG. Residues 610–630 traverse the membrane as a helical segment; the sequence is ILGLLIVFITIVFCAAGIVVF. Residues 631–840 are Cytoplasmic-facing; sequence VLHRRRRYKK…DYLEVLEQQT (210 aa). The segment covering 717-726 has biased composition (basic and acidic residues); the sequence is QRSLLERENH. Positions 717 to 736 are disordered; it reads QRSLLERENHSPLTGSNMKY. The span at 727 to 736 shows a compositional bias: polar residues; that stretch reads SPLTGSNMKY.

This sequence belongs to the SLITRK family. In terms of tissue distribution, in the embryo, expressed in otic cyst, lateral trunk epidermis and underlying mesodermal tissue, limb bud, maxillary process, cochlea, retina, tongue, tooth primordium, central nervous system, and primordia of visceral organs including lung, gastrointestinal tract and pancreas. In the central nervous system, expressed primarily in dorsal thalamus, cerebellum and medulla.

The protein localises to the cell membrane. Functionally, regulator of neurite outgrowth required for normal hearing and vision. This chain is SLIT and NTRK-like protein 6 (Slitrk6), found in Mus musculus (Mouse).